A 358-amino-acid chain; its full sequence is Membrane-bound lytic murein transglycosylase C (358 aa).

Residues 1–16 (MKKILALLVIAPLLVS) form the signal peptide. A lipid anchor (N-palmitoyl cysteine) is attached at cysteine 17. The S-diacylglycerol cysteine moiety is linked to residue cysteine 17.

The protein belongs to the transglycosylase Slt family.

It is found in the cell outer membrane. The catalysed reaction is Exolytic cleavage of the (1-&gt;4)-beta-glycosidic linkage between N-acetylmuramic acid (MurNAc) and N-acetylglucosamine (GlcNAc) residues in peptidoglycan, from either the reducing or the non-reducing ends of the peptidoglycan chains, with concomitant formation of a 1,6-anhydrobond in the MurNAc residue.. Its function is as follows. Murein-degrading enzyme. May play a role in recycling of muropeptides during cell elongation and/or cell division. This Yersinia pseudotuberculosis serotype O:1b (strain IP 31758) protein is Membrane-bound lytic murein transglycosylase C.